The primary structure comprises 117 residues: Protein RALF-like 27 (117 aa).

The signal sequence occupies residues 1–27 (MTKTFFSFSFFFTSSLLLLLAATSATA). A propeptide spans 28 to 71 (STGNVTSGLRYDGCAPGDTVGECITATVEEEDEEGVEAVVRRIL) (removed in mature form). Asparagine 31 is a glycosylation site (N-linked (GlcNAc...) asparagine). 2 disulfides stabilise this stretch: cysteine 88–cysteine 96 and cysteine 107–cysteine 113.

It belongs to the plant rapid alkalinization factor (RALF) family.

It localises to the secreted. Cell signaling peptide that may regulate plant stress, growth, and development. Mediates a rapid alkalinization of extracellular space by mediating a transient increase in the cytoplasmic Ca(2+) concentration leading to a calcium-dependent signaling events through a cell surface receptor and a concomitant activation of some intracellular mitogen-activated protein kinases. The polypeptide is Protein RALF-like 27 (RALFL27) (Arabidopsis thaliana (Mouse-ear cress)).